The chain runs to 504 residues: Putative glycerol-3-phosphate transporter 2 (504 aa).

A run of 12 helical transmembrane segments spans residues 31 to 51 (LSFK…YIAF), 84 to 104 (ALLG…MFVA), 116 to 136 (FLTI…VAFW), 145 to 165 (FLAV…CIVA), 178 to 198 (MIMG…SLIA), 210 to 230 (FLGP…FLPV), 280 to 302 (IPGV…TFLY), 324 to 344 (GNLS…AGYI), 352 to 372 (AITA…YRVF), 378 to 398 (TINV…FALI), 424 to 444 (AIID…TGYI), and 452 to 472 (VFYM…KLII).

Belongs to the major facilitator superfamily. Organophosphate:Pi antiporter (OPA) (TC 2.A.1.4) family. As to expression, expressed in the root-hair differentiation zone.

The protein resides in the membrane. This Arabidopsis thaliana (Mouse-ear cress) protein is Putative glycerol-3-phosphate transporter 2.